Consider the following 1243-residue polypeptide: MVYYDILAKELEKLYEIAEKARAQGYDPKDIVEIPLANNMGERVAHLISAIHEQLDVKKTAELILELEKQYGFLDWRVGLKLIDYALEGKLIPYDDILKRIDLGVRLALGYITMGVVSAPLEGLVELRIKKRKDGKPYLALYYAGPIRGAGGTAAAVSVLFADYARKKAGLYEYDPTKEEIERYKIEIDSYHNKVARLQYKPSDEEIEFLVKHIPVEINGDPTSDKEVPSYKNLERVETNRIRGGMCLVIAEGIAQKAKKIYGKITEWGKEFGLEHWEFLGEYLKLQKEIQAKLAAESGGEIEGKEIKRKITLFLDEIKKEEITVKYPTPAGKYLQEITAGRPIFSLPMAIGGFRLRYGRSFATGFATSGIHPATMFLTYGFLAIGTQMRGERPKKSTIVTPVTSLHPPIVKLKDGTVKKVHSVVEAIKIANDVEEILFLGDILTAFGDWLNEKANLVPSPYVEEWWIQEFDRAAMKKTDYKIEFDVMKPRKLFKIEGLENLSQYLGIPKDRLEEIIRKPFSRKPTIDEAITISEKLGIPLHPEYTPFWVHITKEELIKLIEELRKAKIQNNKIYFHESQKELKAILEKLFIEHFREGEYFYINESMTKSLLYQLDNLNLEKAKKEFDNAIDALDLVNRLSPIEIRDVAGVYVGFRAGRPEKAKMREMTGRPHGLFPVGEEGGKMRNVIEAYNKGYVKAEFALYYCNHCKRYTIYRKCEVCGNKTKEVYVCKEIINRLKTSLFKQYKDWKKVEEEIASHLWAEAVTHSKNNCREPKRYSLIKLNIKHYVDRAVQKLKLFNIPKLVKGVRGTSNKDHIVERLEKAFLRSVSDVYVNKDGTIRYDGTQIPLTHFRPKDLIGVTIEKLKELGYTHDIYGNPLEREDQILQLKPQDIILPYGILVKSRLNKNKIVRTDAAEAFKKVANFVDEELKRLYNLEPYYNIEKAEDLIGKIVFGIAPHTSAAVVGRIIGFTPIQGIIAHPIWHAGQRRNCDGDETAVMLGLDALINFSREYLPDKRGARTMDAPLVLTLKLELKAVDDEVHDMDIVYNYPLEFYYETLKGSPAKDVKKQCGILTLGDFLKEEDISKIPIGFTHPTKSIRLGNKVSLYKRLKTMQQKTEWQLKLAERIRAVDENIVAEIVIEKHFMPDIKGNLRGFSSQVFRCTKCDTTYDRVPLSGKCPKCGGNIVFTVHEGTIKKYLPTSLYLARKYKIKKFTKQSLFLLDRRIKQIFGGEKKSLADFINS.

This sequence belongs to the archaeal DNA polymerase II family. In terms of assembly, heterodimer of a large subunit and a small subunit.

The catalysed reaction is DNA(n) + a 2'-deoxyribonucleoside 5'-triphosphate = DNA(n+1) + diphosphate. It carries out the reaction Exonucleolytic cleavage in the 3'- to 5'-direction to yield nucleoside 5'-phosphates.. Its function is as follows. Possesses two activities: a DNA synthesis (polymerase) and an exonucleolytic activity that degrades single-stranded DNA in the 3'- to 5'-direction. Has a template-primer preference which is characteristic of a replicative DNA polymerase. The polypeptide is DNA polymerase II large subunit (Nanoarchaeum equitans (strain Kin4-M)).